The chain runs to 132 residues: Small ribosomal subunit protein uS8 (132 aa).

Belongs to the universal ribosomal protein uS8 family. As to quaternary structure, part of the 30S ribosomal subunit. Contacts proteins S5 and S12.

Its function is as follows. One of the primary rRNA binding proteins, it binds directly to 16S rRNA central domain where it helps coordinate assembly of the platform of the 30S subunit. The sequence is that of Small ribosomal subunit protein uS8 from Brucella melitensis biotype 1 (strain ATCC 23456 / CCUG 17765 / NCTC 10094 / 16M).